A 419-amino-acid chain; its full sequence is UDP-N-acetylglucosamine 1-carboxyvinyltransferase (419 aa).

22 to 23 (KN) serves as a coordination point for phosphoenolpyruvate. Arg-92 contacts UDP-N-acetyl-alpha-D-glucosamine. Residue Cys-116 is the Proton donor of the active site. Residue Cys-116 is modified to 2-(S-cysteinyl)pyruvic acid O-phosphothioketal. Residues 121–125 (RPVDQ), Asp-306, and Ile-328 each bind UDP-N-acetyl-alpha-D-glucosamine.

The protein belongs to the EPSP synthase family. MurA subfamily.

It is found in the cytoplasm. The enzyme catalyses phosphoenolpyruvate + UDP-N-acetyl-alpha-D-glucosamine = UDP-N-acetyl-3-O-(1-carboxyvinyl)-alpha-D-glucosamine + phosphate. The protein operates within cell wall biogenesis; peptidoglycan biosynthesis. Cell wall formation. Adds enolpyruvyl to UDP-N-acetylglucosamine. Target for the antibiotic phosphomycin. In Acinetobacter guillouiae (Acinetobacter genomosp. 11), this protein is UDP-N-acetylglucosamine 1-carboxyvinyltransferase.